The following is a 461-amino-acid chain: MLEFLSQQKPKILIIGDFMVDNYTWCDCSRISPEAPVLVAKTLKEDKRLGGAANVYANLKSLGADVFALGVVGDDKSGKFLQENLKGEFLIQKGRKTPFKNRIMAHNQQVLRLDEEDISEILLENELIALFDEKIKDFKAVVLSDYAKGILTPKVCKAVIKKAKALNIPVLVDPKGSDFSKYSGATLLTPNKKEALEALKFENLEGENLEKGIKKLKEDFSLRYSIITLSEAGIALFNEGLKIAPAKALEVYDVTGAGDSVIAVLAFCLANEIEIFKACELANEAAAVVVSKIGSVSVSFDEIRSFKSMSFEKKIKNKEELLTLLKQNDKKIVFTNGCFDIVHFGHIKYLEKAKRLGDVLIVGLNSDASVKRLKGESRPVNSEFQRACMLAAFYFVDFVVIFDEDTPLELISFLKPDILVKGADYKDKLVVGSNLISRVELIDFEEGFSTSKIIEKIKDKK.

Residues Met1–Glu312 are ribokinase. Asn191–Glu194 lines the ATP pocket. Asp259 is an active-site residue. Residues Phe334–Lys461 form a cytidylyltransferase region.

The protein in the N-terminal section; belongs to the carbohydrate kinase PfkB family. It in the C-terminal section; belongs to the cytidylyltransferase family. As to quaternary structure, homodimer.

It catalyses the reaction D-glycero-beta-D-manno-heptose 7-phosphate + ATP = D-glycero-beta-D-manno-heptose 1,7-bisphosphate + ADP + H(+). The catalysed reaction is D-glycero-beta-D-manno-heptose 1-phosphate + ATP + H(+) = ADP-D-glycero-beta-D-manno-heptose + diphosphate. Its pathway is nucleotide-sugar biosynthesis; ADP-L-glycero-beta-D-manno-heptose biosynthesis; ADP-L-glycero-beta-D-manno-heptose from D-glycero-beta-D-manno-heptose 7-phosphate: step 1/4. It participates in nucleotide-sugar biosynthesis; ADP-L-glycero-beta-D-manno-heptose biosynthesis; ADP-L-glycero-beta-D-manno-heptose from D-glycero-beta-D-manno-heptose 7-phosphate: step 3/4. Catalyzes the phosphorylation of D-glycero-D-manno-heptose 7-phosphate at the C-1 position to selectively form D-glycero-beta-D-manno-heptose-1,7-bisphosphate. Its function is as follows. Catalyzes the ADP transfer from ATP to D-glycero-beta-D-manno-heptose 1-phosphate, yielding ADP-D-glycero-beta-D-manno-heptose. This is Bifunctional protein HldE from Campylobacter jejuni (strain RM1221).